The sequence spans 577 residues: E3 ubiquitin-protein ligase MSL2 (577 aa).

The segment at 1–116 (MNPVNATALY…CEYITQTTLA (116 aa)) is sufficient for interaction with MSL1. Zn(2+) is bound by residues Cys44, Cys47, Cys62, His64, Cys67, Cys70, Cys81, and Cys84. The segment at 44 to 85 (CCVCGHLLQDPIAPTNSTCQHYVCKTCKGKKMMMKPSCSWCK) adopts an RING-type zinc-finger fold. Lys375 is covalently cross-linked (Glycyl lysine isopeptide (Lys-Gly) (interchain with G-Cter in SUMO2)). A disordered region spans residues 405–427 (TKSMKKSHEHGSKKSHSKTKPGI). Residues 407-423 (SMKKSHEHGSKKSHSKT) show a composition bias toward basic residues. Phosphoserine is present on Ser447. In terms of domain architecture, CXC MSL2-type spans 457 to 508 (QEKKGCKCGRATQNPSVLTCRGQRCPCYSNRKACLDCICRGCQNSYMANGEK). 9 residues coordinate Zn(2+): Cys462, Cys464, Cys476, Cys481, Cys483, Cys490, Cys493, Cys495, and Cys498.

It belongs to the MSL2 family. As to quaternary structure, component of a multisubunit histone acetyltransferase complex (MSL) at least composed of the KAT8/MOF/MYST1, MSL1/hampin, MSL2 and MSL3. Forms a MSL heterotetrameric core with MSL1.

It is found in the nucleus. It localises to the chromosome. The catalysed reaction is S-ubiquitinyl-[E2 ubiquitin-conjugating enzyme]-L-cysteine + [acceptor protein]-L-lysine = [E2 ubiquitin-conjugating enzyme]-L-cysteine + N(6)-ubiquitinyl-[acceptor protein]-L-lysine.. The protein operates within protein modification; protein ubiquitination. In terms of biological role, non-catalytic component of the MSL histone acetyltransferase complex, a multiprotein complex that mediates the majority of histone H4 acetylation at 'Lys-16' (H4K16ac), an epigenetic mark that prevents chromatin compaction. The MSL complex is required for chromosome stability and genome integrity by maintaining homeostatic levels of H4K16ac. The MSL complex is also involved in gene dosage by promoting up-regulation of genes expressed by the X chromosome. X up-regulation is required to compensate for autosomal biallelic expression. The MSL complex also participates in gene dosage compensation by promoting expression of Tsix non-coding RNA. MSL2 plays a key role in gene dosage by ensuring biallelic expression of a subset of dosage-sensitive genes, including many haploinsufficient genes. Acts by promoting promoter-enhancer contacts, thereby preventing DNA methylation of one allele and creating a methylation-free environment for methylation-sensitive transcription factors such as SP1, KANSL1 and KANSL3. Also acts as an E3 ubiquitin ligase that promotes monoubiquitination of histone H2B at 'Lys-35' (H2BK34Ub), but not that of H2A. This activity is greatly enhanced by heterodimerization with MSL1. H2B ubiquitination in turn stimulates histone H3 methylation at 'Lys-4' (H3K4me) and 'Lys-79' (H3K79me) and leads to gene activation, including that of HOXA9 and MEIS1. Also involved in the DNA damage response by mediating ubiquitination of TP53/p53 and TP53BP1. The polypeptide is E3 ubiquitin-protein ligase MSL2 (Homo sapiens (Human)).